Reading from the N-terminus, the 245-residue chain is Probable phosphatase YcdX (245 aa).

Zn(2+)-binding residues include His-7, His-9, His-15, His-40, Glu-73, His-101, His-131, Asp-192, and His-194.

Belongs to the PHP family. Homotrimer. The cofactor is Zn(2+).

The polypeptide is Probable phosphatase YcdX (Escherichia coli O17:K52:H18 (strain UMN026 / ExPEC)).